The chain runs to 375 residues: Queuine tRNA-ribosyltransferase (375 aa).

Aspartate 89 serves as the catalytic Proton acceptor. Residues aspartate 89–phenylalanine 93, aspartate 143, glutamine 185, and glycine 212 contribute to the substrate site. Residues glycine 243 to aspartate 249 are RNA binding. The active-site Nucleophile is aspartate 262. An RNA binding; important for wobble base 34 recognition region spans residues threonine 267–arginine 271. Residues cysteine 300, cysteine 302, cysteine 305, and histidine 331 each coordinate Zn(2+).

It belongs to the queuine tRNA-ribosyltransferase family. In terms of assembly, homodimer. Within each dimer, one monomer is responsible for RNA recognition and catalysis, while the other monomer binds to the replacement base PreQ1. Requires Zn(2+) as cofactor.

The catalysed reaction is 7-aminomethyl-7-carbaguanine + guanosine(34) in tRNA = 7-aminomethyl-7-carbaguanosine(34) in tRNA + guanine. Its pathway is tRNA modification; tRNA-queuosine biosynthesis. Catalyzes the base-exchange of a guanine (G) residue with the queuine precursor 7-aminomethyl-7-deazaguanine (PreQ1) at position 34 (anticodon wobble position) in tRNAs with GU(N) anticodons (tRNA-Asp, -Asn, -His and -Tyr). Catalysis occurs through a double-displacement mechanism. The nucleophile active site attacks the C1' of nucleotide 34 to detach the guanine base from the RNA, forming a covalent enzyme-RNA intermediate. The proton acceptor active site deprotonates the incoming PreQ1, allowing a nucleophilic attack on the C1' of the ribose to form the product. After dissociation, two additional enzymatic reactions on the tRNA convert PreQ1 to queuine (Q), resulting in the hypermodified nucleoside queuosine (7-(((4,5-cis-dihydroxy-2-cyclopenten-1-yl)amino)methyl)-7-deazaguanosine). This chain is Queuine tRNA-ribosyltransferase, found in Pseudoalteromonas translucida (strain TAC 125).